A 304-amino-acid polypeptide reads, in one-letter code: MDKYNLIIGSHVSLKANDFFYGSVKEALSYGANTLMVYTGAPQNTRRQPIELFKINEAHNLLKEHNIDLNNLIVHAPYIINPCSSKKYVRELAKEFLIQEIERTQFMGITKIVLHPGSCLDQDEDIALKQVYTMLNEIFATINTNVVVCLETMSGKGSEIGINLKQLKTIIDNVDSKKNIGVCLDTCHMSDSGIALDHDSFNQYLKEFDAQIGIDYIKVLHINDSKNPRGANKDRHENLGYGTIGFDNLINIIYHPLLNNIPKILETPWFDFHDQSISLYEYEIKMIRDRKWFDIKYKLLVGNK.

Residues His-75, His-115, Glu-151, Asp-185, His-188, His-221, Asp-234, His-236, and Glu-266 each coordinate Zn(2+).

Belongs to the AP endonuclease 2 family. It depends on Zn(2+) as a cofactor.

The enzyme catalyses Endonucleolytic cleavage to 5'-phosphooligonucleotide end-products.. Endonuclease IV plays a role in DNA repair. It cleaves phosphodiester bonds at apurinic or apyrimidinic (AP) sites, generating a 3'-hydroxyl group and a 5'-terminal sugar phosphate. The polypeptide is Probable endonuclease 4 (Ureaplasma urealyticum serovar 10 (strain ATCC 33699 / Western)).